The following is a 259-amino-acid chain: Thiazole synthase (259 aa).

Lys95 serves as the catalytic Schiff-base intermediate with DXP. Residues Gly156, Ala182 to Gly183, and Ala204 to Ser205 each bind 1-deoxy-D-xylulose 5-phosphate.

It belongs to the ThiG family. Homotetramer. Forms heterodimers with either ThiH or ThiS.

It localises to the cytoplasm. The enzyme catalyses [ThiS sulfur-carrier protein]-C-terminal-Gly-aminoethanethioate + 2-iminoacetate + 1-deoxy-D-xylulose 5-phosphate = [ThiS sulfur-carrier protein]-C-terminal Gly-Gly + 2-[(2R,5Z)-2-carboxy-4-methylthiazol-5(2H)-ylidene]ethyl phosphate + 2 H2O + H(+). The protein operates within cofactor biosynthesis; thiamine diphosphate biosynthesis. Its function is as follows. Catalyzes the rearrangement of 1-deoxy-D-xylulose 5-phosphate (DXP) to produce the thiazole phosphate moiety of thiamine. Sulfur is provided by the thiocarboxylate moiety of the carrier protein ThiS. In vitro, sulfur can be provided by H(2)S. This Corynebacterium aurimucosum (strain ATCC 700975 / DSM 44827 / CIP 107346 / CN-1) (Corynebacterium nigricans) protein is Thiazole synthase.